The sequence spans 328 residues: MHNSLAELIKPRTVEVVPHGSHSARVVIEPLERGFGHTLGNALRRVLLSAIPGAAVTDVVIDGVLHEYSTIEGVQEDVIDVLLNLKNLAIRLNGPHDVYLNVDKHGPGPVLAGDIEASHDVEVLNPELLIAHINGNGRLRMTLHVQKGRGYQPVANRAIEGDSAIGTLHLDASFSPIKKVSYVVESARVEQRTDLDRLVIELQTNGTVQPEEAVKHAANILNQHLAILVDLKGEDLPLFGEDGPQFDPLLLHPVDDLELTVRSANCLKAENIFYIGDLIQRSEADLLKTPNLGKKSLTEIKDVLATKGLSLGMRLENWPPEGLKKLNQ.

An alpha N-terminal domain (alpha-NTD) region spans residues 1–232; it reads MHNSLAELIK…QHLAILVDLK (232 aa). The tract at residues 246-328 is alpha C-terminal domain (alpha-CTD); it reads FDPLLLHPVD…PPEGLKKLNQ (83 aa).

Belongs to the RNA polymerase alpha chain family. As to quaternary structure, homodimer. The RNAP catalytic core consists of 2 alpha, 1 beta, 1 beta' and 1 omega subunit. When a sigma factor is associated with the core the holoenzyme is formed, which can initiate transcription.

The catalysed reaction is RNA(n) + a ribonucleoside 5'-triphosphate = RNA(n+1) + diphosphate. In terms of biological role, DNA-dependent RNA polymerase catalyzes the transcription of DNA into RNA using the four ribonucleoside triphosphates as substrates. In Methylococcus capsulatus (strain ATCC 33009 / NCIMB 11132 / Bath), this protein is DNA-directed RNA polymerase subunit alpha.